Here is a 503-residue protein sequence, read N- to C-terminus: Cytochrome P450 11B1, mitochondrial (503 aa).

The transit peptide at 1 to 24 (MALWAKARVWMAGPWLSLHRARPL) directs the protein to the mitochondrion. Cysteine 450 contributes to the heme binding site.

This sequence belongs to the cytochrome P450 family. Heme serves as cofactor.

The protein localises to the mitochondrion inner membrane. The enzyme catalyses a steroid + 2 reduced [adrenodoxin] + O2 + 2 H(+) = an 11beta-hydroxysteroid + 2 oxidized [adrenodoxin] + H2O. It carries out the reaction 11-deoxycortisol + 2 reduced [adrenodoxin] + O2 + 2 H(+) = cortisol + 2 oxidized [adrenodoxin] + H2O. It catalyses the reaction 21-hydroxyprogesterone + 2 reduced [adrenodoxin] + O2 + 2 H(+) = corticosterone + 2 oxidized [adrenodoxin] + H2O. The catalysed reaction is corticosterone + 2 reduced [adrenodoxin] + O2 + 2 H(+) = 18-hydroxycorticosterone + 2 oxidized [adrenodoxin] + H2O. The enzyme catalyses 18-hydroxycorticosterone + 2 reduced [adrenodoxin] + O2 + 2 H(+) = aldosterone + 2 oxidized [adrenodoxin] + 2 H2O. It carries out the reaction 21-hydroxyprogesterone + 2 reduced [adrenodoxin] + O2 + 2 H(+) = 19-hydroxy-11-deoxycorticosterone + 2 oxidized [adrenodoxin] + H2O. It catalyses the reaction 19-hydroxy-11-deoxycorticosterone + 2 reduced [adrenodoxin] + O2 + 2 H(+) = 19-oxo-11-deoxycorticosterone + 2 oxidized [adrenodoxin] + 2 H2O. It functions in the pathway steroid biosynthesis; glucocorticoid biosynthesis. The protein operates within steroid hormone biosynthesis. In terms of biological role, a cytochrome P450 monooxygenase that catalyzes the biosynthesis of aldosterone and other adrenal corticoids. Differing from other species (such as human, rat and mice), it is able to catalyze three sequential oxidative reactions of 11-deoxycorticosterone (21-hydroxyprogesterone), namely 11-beta hydroxylation, followed by two successive oxidations at C18 yielding 18-hydroxy and then 18-oxo intermediates, and ending with the formation of aldosterone. Steroid 11beta, 18- and 19-hydroxylase. Mechanistically, uses molecular oxygen inserting one oxygen atom into a substrate and reducing the second into a water molecule. Two electrons are provided by NADPH via a two-protein mitochondrial transfer system comprising flavoprotein FDXR (adrenodoxin/ferredoxin reductase) and nonheme iron-sulfur protein FDX1 or FDX2 (adrenodoxin/ferredoxin). The chain is Cytochrome P450 11B1, mitochondrial (CYP11B1) from Ovis aries (Sheep).